Consider the following 89-residue polypeptide: Small ribosomal subunit protein uS15 (89 aa).

The protein belongs to the universal ribosomal protein uS15 family. In terms of assembly, part of the 30S ribosomal subunit. Forms a bridge to the 50S subunit in the 70S ribosome, contacting the 23S rRNA.

In terms of biological role, one of the primary rRNA binding proteins, it binds directly to 16S rRNA where it helps nucleate assembly of the platform of the 30S subunit by binding and bridging several RNA helices of the 16S rRNA. Its function is as follows. Forms an intersubunit bridge (bridge B4) with the 23S rRNA of the 50S subunit in the ribosome. The polypeptide is Small ribosomal subunit protein uS15 (Saccharopolyspora erythraea (strain ATCC 11635 / DSM 40517 / JCM 4748 / NBRC 13426 / NCIMB 8594 / NRRL 2338)).